A 290-amino-acid polypeptide reads, in one-letter code: Probable adenylate kinase 2, chloroplastic (290 aa).

The segment covering 1-10 has biased composition (low complexity); the sequence is MASSMAATAT. The tract at residues 1-37 is disordered; that stretch reads MASSMAATATLSPPVLSAERPTVRGGLFLPPSPATSR. The transit peptide at 1–61 directs the protein to the chloroplast; it reads MASSMAATAT…ATRKPRSLPR (61 aa). 83–88 is an ATP binding site; that stretch reads ASGKGT. The segment at 103–132 is NMP; that stretch reads SAGDLLRAEIAAGSENGKRAKEFMEKGQLV. AMP-binding positions include R109, 130–132, 159–162, and Q166; these read QLV and GYPR. Residues R193, R197, and 206 to 207 each bind ATP; that span reads IY. The segment at 196 to 229 is LID; it reads GRRLDPVTGKIYHLKYSPPENEEIASRLTQRFDD. AMP is bound by residues R226 and R237.

It belongs to the adenylate kinase family.

Its subcellular location is the plastid. It is found in the chloroplast. The catalysed reaction is AMP + ATP = 2 ADP. In terms of biological role, catalyzes the reversible transfer of the terminal phosphate group between ATP and AMP. Plays an important role in cellular energy homeostasis and in adenine nucleotide metabolism. In Oryza sativa subsp. japonica (Rice), this protein is Probable adenylate kinase 2, chloroplastic.